A 245-amino-acid chain; its full sequence is Putative transport permease YvfS (245 aa).

Transmembrane regions (helical) follow at residues 20–40 (YFVLWSLIMPIAFYYFFTNVV), 53–73 (HYLMSMTVFSVMGSSIMTLGI), 103–123 (IGQSVIHVLSITVIFLFGAII), 137–157 (GLWILFGALPFLALGTLIGLM), 164–184 (AGISNVLYMLLALGGGMWMPF), and 214–234 (GSPTWKNILILIAYMMLFMLL). The region spanning 20-242 (YFVLWSLIMP…LLSKYIRRKQ (223 aa)) is the ABC transmembrane type-2 domain.

The protein belongs to the ABC-2 integral membrane protein family.

It is found in the cell membrane. This Bacillus subtilis (strain 168) protein is Putative transport permease YvfS (yvfS).